A 146-amino-acid polypeptide reads, in one-letter code: 3-hydroxyacyl-[acyl-carrier-protein] dehydratase FabZ (146 aa).

His-48 is a catalytic residue.

This sequence belongs to the thioester dehydratase family. FabZ subfamily.

It is found in the cytoplasm. It catalyses the reaction a (3R)-hydroxyacyl-[ACP] = a (2E)-enoyl-[ACP] + H2O. Its function is as follows. Involved in unsaturated fatty acids biosynthesis. Catalyzes the dehydration of short chain beta-hydroxyacyl-ACPs and long chain saturated and unsaturated beta-hydroxyacyl-ACPs. This is 3-hydroxyacyl-[acyl-carrier-protein] dehydratase FabZ from Paracidovorax citrulli (strain AAC00-1) (Acidovorax citrulli).